The chain runs to 251 residues: 3-deoxy-manno-octulosonate cytidylyltransferase (251 aa).

Belongs to the KdsB family.

The protein resides in the cytoplasm. It catalyses the reaction 3-deoxy-alpha-D-manno-oct-2-ulosonate + CTP = CMP-3-deoxy-beta-D-manno-octulosonate + diphosphate. It participates in nucleotide-sugar biosynthesis; CMP-3-deoxy-D-manno-octulosonate biosynthesis; CMP-3-deoxy-D-manno-octulosonate from 3-deoxy-D-manno-octulosonate and CTP: step 1/1. It functions in the pathway bacterial outer membrane biogenesis; lipopolysaccharide biosynthesis. Its function is as follows. Activates KDO (a required 8-carbon sugar) for incorporation into bacterial lipopolysaccharide in Gram-negative bacteria. In Sodalis glossinidius (strain morsitans), this protein is 3-deoxy-manno-octulosonate cytidylyltransferase.